The following is a 267-amino-acid chain: MTQIHPTALVDPKAELASDVTVGPFSIVGPNVRIGSGTRVGSHTTVEGYTTIGEGNTIGPYASVGGVPQDMKYRNEPTRLEIGDRNTIREFTTIHTGTVQDRGLTSLGNDNWIMAYVHIAHDCTVGNHTVFSSNAQIAGHVEVGDWAILGGMSGVHQFVRIGAHAMLGGASALVQDVPPFVIAASDKSGNKATPHGVNVEGLRRRGFDAGQIAALRQAYKLLYKSDLSFDEARNEITALLGQSDAGTAAPLRAFVDFLAATQRGIVR.

This sequence belongs to the transferase hexapeptide repeat family. LpxA subfamily. As to quaternary structure, homotrimer.

The protein localises to the cytoplasm. It catalyses the reaction a (3R)-hydroxyacyl-[ACP] + UDP-N-acetyl-alpha-D-glucosamine = a UDP-3-O-[(3R)-3-hydroxyacyl]-N-acetyl-alpha-D-glucosamine + holo-[ACP]. The protein operates within glycolipid biosynthesis; lipid IV(A) biosynthesis; lipid IV(A) from (3R)-3-hydroxytetradecanoyl-[acyl-carrier-protein] and UDP-N-acetyl-alpha-D-glucosamine: step 1/6. Involved in the biosynthesis of lipid A, a phosphorylated glycolipid that anchors the lipopolysaccharide to the outer membrane of the cell. The polypeptide is Acyl-[acyl-carrier-protein]--UDP-N-acetylglucosamine O-acyltransferase (Cupriavidus necator (strain ATCC 17699 / DSM 428 / KCTC 22496 / NCIMB 10442 / H16 / Stanier 337) (Ralstonia eutropha)).